The following is a 283-amino-acid chain: CDP-abequose synthase (283 aa).

Residues 7-13 (GGSGYIG), 48-49 (EF), Tyr-129, and Lys-133 contribute to the NAD(+) site. Residue Tyr-129 is the Proton acceptor of the active site.

The protein belongs to the NAD(P)-dependent epimerase/dehydratase family.

It carries out the reaction CDP-alpha-D-abequose + NADP(+) = CDP-4-dehydro-3,6-dideoxy-alpha-D-glucose + NADPH + H(+). The protein operates within bacterial outer membrane biogenesis; LPS O-antigen biosynthesis. In terms of biological role, the CDP-abequose synthase is involved in lipopolysaccharides (LPS) synthesis containing abequose which are important antigens of the cell surface responsible for the serological O specificity. Derivatives of the 3,6-dideoxyhexose group have a particular highly immunogenic character. The polypeptide is CDP-abequose synthase (rfbJ) (Yersinia pseudotuberculosis).